The primary structure comprises 568 residues: Estrogen receptor beta (568 aa).

A modulating region spans residues 1–177 (MHQQSPVDDV…SLRGKADMHY (177 aa)). NR C4-type zinc fingers lie at residues 178-198 (CAVC…CEGC) and 214-238 (CPAT…LRKC). Residues 178–243 (CAVCSDYASG…RLRKCYEVGM (66 aa)) constitute a DNA-binding region (nuclear receptor). Residues 300-536 (TPEELIARIM…DLLLEMLDAH (237 aa)) enclose the NR LBD domain.

Belongs to the nuclear hormone receptor family. NR3 subfamily. As to quaternary structure, binds DNA as a homodimer. Can form a heterodimer with ER-alpha.

The protein localises to the nucleus. Functionally, binds estrogens with an affinity similar to that of ER-alpha, and activates expression of reporter genes containing estrogen response elements (ERE) in an estrogen-dependent manner. The polypeptide is Estrogen receptor beta (esr2) (Oncorhynchus mykiss (Rainbow trout)).